Here is a 345-residue protein sequence, read N- to C-terminus: N-acetyl-gamma-glutamyl-phosphate reductase (345 aa).

Residue Cys-149 is part of the active site.

It belongs to the NAGSA dehydrogenase family. Type 1 subfamily.

Its subcellular location is the cytoplasm. It catalyses the reaction N-acetyl-L-glutamate 5-semialdehyde + phosphate + NADP(+) = N-acetyl-L-glutamyl 5-phosphate + NADPH + H(+). It participates in amino-acid biosynthesis; L-arginine biosynthesis; N(2)-acetyl-L-ornithine from L-glutamate: step 3/4. Functionally, catalyzes the NADPH-dependent reduction of N-acetyl-5-glutamyl phosphate to yield N-acetyl-L-glutamate 5-semialdehyde. This chain is N-acetyl-gamma-glutamyl-phosphate reductase, found in Bacillus cereus (strain 03BB102).